The primary structure comprises 609 residues: Kelch-like protein 20 (609 aa).

The BTB domain occupies 68–135 (CDVVLVVGAK…AYTSQITVEE (68 aa)). The region spanning 170-272 (CLGIRAFADT…SPKFLVGTVG (103 aa)) is the BACK domain. Kelch repeat units lie at residues 319–365 (VLFA…VLDD), 367–413 (LYAV…VLGG), 414–460 (FLYA…VLGG), 462–507 (LYAV…VYQD), 509–554 (IYAV…VVNG), and 556–601 (LMAV…VIKM).

In terms of assembly, component of the BCR(KLHL20) E3 ubiquitin ligase complex, at least composed of CUL3, KLHL20 and RBX1. Interacts with PDZ-RhoGEF/ARHGEF11, DAPK1, PML and CORO7. Interacts with F-actin. Interacts with IFN-gamma (IFNG). Interacts (via kelch repeats) with IVNS1ABP (via kelch repeats); this interaction blocks the assembly of CUL3-KLHL20 complex.

It localises to the cytoplasm. It is found in the perinuclear region. Its subcellular location is the nucleus. The protein localises to the golgi apparatus. The protein resides in the trans-Golgi network. It localises to the cell projection. It is found in the axon. Its subcellular location is the dendrite. It participates in protein modification; protein ubiquitination. Its function is as follows. Substrate-specific adapter of a BCR (BTB-CUL3-RBX1) E3 ubiquitin-protein ligase complex involved in interferon response and anterograde Golgi to endosome transport. The BCR(KLHL20) E3 ubiquitin ligase complex mediates the ubiquitination of DAPK1, leading to its degradation by the proteasome, thereby acting as a negative regulator of apoptosis. The BCR(KLHL20) E3 ubiquitin ligase complex also specifically mediates 'Lys-33'-linked ubiquitination. Involved in anterograde Golgi to endosome transport by mediating 'Lys-33'-linked ubiquitination of CORO7, promoting interaction between CORO7 and EPS15, thereby facilitating actin polymerization and post-Golgi trafficking. Also acts as a regulator of endothelial migration during angiogenesis by controlling the activation of Rho GTPases. The BCR(KLHL20) E3 ubiquitin ligase complex acts as a regulator of neurite outgrowth by mediating ubiquitination and degradation of PDZ-RhoGEF/ARHGEF11. This chain is Kelch-like protein 20 (KLHL20), found in Bos taurus (Bovine).